The primary structure comprises 181 residues: Large ribosomal subunit protein uL5 (181 aa).

Belongs to the universal ribosomal protein uL5 family. Part of the 50S ribosomal subunit; part of the 5S rRNA/L5/L18/L25 subcomplex. Contacts the 5S rRNA and the P site tRNA. Forms a bridge to the 30S subunit in the 70S ribosome.

Its function is as follows. This is one of the proteins that bind and probably mediate the attachment of the 5S RNA into the large ribosomal subunit, where it forms part of the central protuberance. In the 70S ribosome it contacts protein S13 of the 30S subunit (bridge B1b), connecting the 2 subunits; this bridge is implicated in subunit movement. Contacts the P site tRNA; the 5S rRNA and some of its associated proteins might help stabilize positioning of ribosome-bound tRNAs. The sequence is that of Large ribosomal subunit protein uL5 from Helicobacter acinonychis (strain Sheeba).